The primary structure comprises 108 residues: MAVQAYRSLKKYETFSYLPQMTPEQVRRQIAHAIAQGWNPAVEHTEKGTPAKASYWYMWKLPLFGEQSVDAVVAEIEACHREFPDQMVRFVAYDNYAQSQGMAFVVYR.

It belongs to the RuBisCO small chain family. As to quaternary structure, heterohexadecamer of 8 large and 8 small subunits.

Functionally, ruBisCO catalyzes two reactions: the carboxylation of D-ribulose 1,5-bisphosphate, the primary event in carbon dioxide fixation, as well as the oxidative fragmentation of the pentose substrate. Both reactions occur simultaneously and in competition at the same active site. Although the small subunit is not catalytic it is essential for maximal activity. The protein is Ribulose bisphosphate carboxylase small subunit of Nitrobacter vulgaris.